Here is a 371-residue protein sequence, read N- to C-terminus: Cytochrome b (371 aa).

4 helical membrane passes run 25–45 (FGSMLLTCTALQISTGFFLAV), 69–90 (WIMQNLHAIGASLFFLCIYIHI), 105–125 (WLSGTTLLIILMATAFFGYVL), and 170–190 (FFALHFILPFLITSLSSIHII). Residues His75 and His89 each coordinate heme b. Residues His174 and His188 each contribute to the heme b site. His193 contacts a ubiquinone. The next 4 helical transmembrane spans lie at 218–238 (YKDMFMISSMITLLFIVLSFM), 280–300 (LGGTLALLMSVIILTTTPFTH), 312–332 (LTQALFWTLIATFITITWTAT), and 339–358 (FTLISQVASVTYFSFFIINP).

It belongs to the cytochrome b family. The cytochrome bc1 complex contains 3 respiratory subunits (MT-CYB, CYC1 and UQCRFS1), 2 core proteins (UQCRC1 and UQCRC2) and probably 6 low-molecular weight proteins. The cofactor is heme b.

Its subcellular location is the mitochondrion inner membrane. In terms of biological role, component of the ubiquinol-cytochrome c reductase complex (complex III or cytochrome b-c1 complex) that is part of the mitochondrial respiratory chain. The b-c1 complex mediates electron transfer from ubiquinol to cytochrome c. Contributes to the generation of a proton gradient across the mitochondrial membrane that is then used for ATP synthesis. In Toxicocalamus preussi (Preuss's forest snake), this protein is Cytochrome b (MT-CYB).